Consider the following 481-residue polypeptide: Cysteine--tRNA ligase (481 aa).

Cys29 is a binding site for Zn(2+). A 'HIGH' region motif is present at residues 31–41; sequence PTVYDYSHLGH. Zn(2+)-binding residues include Cys210, His235, and Glu239. Residues 272-276 carry the 'KMSKS' region motif; the sequence is KMSKS. Residue Lys275 participates in ATP binding.

Belongs to the class-I aminoacyl-tRNA synthetase family. In terms of assembly, monomer. Requires Zn(2+) as cofactor.

It localises to the cytoplasm. The catalysed reaction is tRNA(Cys) + L-cysteine + ATP = L-cysteinyl-tRNA(Cys) + AMP + diphosphate. The chain is Cysteine--tRNA ligase from Anaeromyxobacter dehalogenans (strain 2CP-1 / ATCC BAA-258).